The primary structure comprises 91 residues: UPF0512 protein F (91 aa).

This sequence belongs to the UPF0512 family.

This chain is UPF0512 protein F, found in Dictyostelium discoideum (Social amoeba).